Consider the following 578-residue polypeptide: A-type ATP synthase subunit A (578 aa).

Gly228 to Thr235 lines the ATP pocket.

The protein belongs to the ATPase alpha/beta chains family. Has multiple subunits with at least A(3), B(3), C, D, E, F, H, I and proteolipid K(x).

It is found in the cell membrane. It catalyses the reaction ATP + H2O + 4 H(+)(in) = ADP + phosphate + 5 H(+)(out). Functionally, component of the A-type ATP synthase that produces ATP from ADP in the presence of a proton gradient across the membrane. The A chain is the catalytic subunit. This is A-type ATP synthase subunit A from Methanococcoides burtonii (strain DSM 6242 / NBRC 107633 / OCM 468 / ACE-M).